The following is a 511-amino-acid chain: MTNLKLLDGRSLSLHDLHRIIYEGETVGASDESMEKVKQSRKAVEQIVADEKIIYGITTGFGKFSDIFIDPDDVENLQHNLIYSHACGVGSPFPETVSRTMLVLRANALLKGFSGVRPLVIERLLALVNANIHPVIPQQGSLGASGDLAPLSHLALVLLGEGEVFYKGTKTKASFALKEEEIEPITLTAKEGLALINGTQAMTAMGVIAYLEAEKLAFQSEIIASLTMEGLRGIIDAFDEQIHFARGYVEQVDVARRMESYLQDSQLTTRQGELRVQDAYSLRCIPQVHGATWQTLRYVKEKLEIEMNAATDNPLIFDNGQKVISGGNFHGQQIALAMDFLGIAMAELANISERRIERLVNPQLNDLPPFLSAAPGVQSGVMILQYCAASLVSENKTLAHPASVDSIPSSANQEDHVSMGTIGSRHAYQIIQNVRNVLAIELICAMQAVDIRGREKMASFTKKILEKGREHVPYIDQDRMFAKDIERAAKWLKDGSWDFTKMREKERTNHY.

Positions alanine 144–glycine 146 form a cross-link, 5-imidazolinone (Ala-Gly). Position 145 is a 2,3-didehydroalanine (Ser) (serine 145).

Belongs to the PAL/histidase family. Post-translationally, contains an active site 4-methylidene-imidazol-5-one (MIO), which is formed autocatalytically by cyclization and dehydration of residues Ala-Ser-Gly.

It is found in the cytoplasm. The catalysed reaction is L-histidine = trans-urocanate + NH4(+). It participates in amino-acid degradation; L-histidine degradation into L-glutamate; N-formimidoyl-L-glutamate from L-histidine: step 1/3. This chain is Histidine ammonia-lyase, found in Halalkalibacterium halodurans (strain ATCC BAA-125 / DSM 18197 / FERM 7344 / JCM 9153 / C-125) (Bacillus halodurans).